The primary structure comprises 565 residues: MPQASEHRLGRTREPPLNIQPRVGSKLPFAPRARSKERRNPAPGPNPMLRPLPPRPGPPEERLKKLELGRGRTSGPRPSGPLRADHGVPLPGSPPPTVALPLPSRTNLARSKSVSSGDLRPMGIALGGHRGTGELGAALSRLALRPEPPPLRRSTSLRRLGGFPGPPTLFSIRTEPPTPHGSFHVISARPSEPFYSDDKMAHHTLLLGSGHVGLRNLGNTCFLNALLQCLSSTRPLRDFCLRRDFRQEVPGGGRAQELTEAFADVIGALWHPDSCEAVNPTRFRAVFQKYVPSFSGYSQQDAQEFLKLLMERLHLEINRRGRRAPPILASSPAPHPPRLGGALLEEPELSDDDRANLMWKRYLEREDSKIVDLFVGQLKSCLKCQACGYRSTTFEVFCDLSLPIPKKGFAGGKVSLRDCFNLFTKEEELESENAPVCDRCRQKTRSTKKLTVQRFPRILVLHLNRFSASRGSIKKSSVGVDFPLQRLSLGDFASDKAGSPVYQLYALCNHSGSVHYGHYTALCRCQTGWHVYNDSRVSPVSENQVASSEGYVLFYQLMQEPPRCL.

Basic and acidic residues predominate over residues 1–14 (MPQASEHRLGRTRE). 3 disordered regions span residues 1 to 103 (MPQA…LPLP), 109 to 128 (ARSK…ALGG), and 142 to 163 (LALR…LGGF). A compositionally biased stretch (pro residues) spans 42 to 57 (APGPNPMLRPLPPRPG). Basic and acidic residues predominate over residues 58 to 70 (PPEERLKKLELGR). The segment covering 71 to 82 (GRTSGPRPSGPL) has biased composition (low complexity). Residues 134 to 152 (ELGAALSRLALRPEPPPLR) carry the Nuclear export signal motif. A USP domain is found at 212–558 (VGLRNLGNTC…EGYVLFYQLM (347 aa)). Residue cysteine 221 is the Nucleophile of the active site. The Zn(2+) site is built by cysteine 384, cysteine 387, cysteine 437, and cysteine 440. The active-site Proton acceptor is histidine 518.

Belongs to the peptidase C19 family. USP21 subfamily. Interacts with BEND3.

The protein resides in the cytoplasm. It is found in the nucleus. The catalysed reaction is Thiol-dependent hydrolysis of ester, thioester, amide, peptide and isopeptide bonds formed by the C-terminal Gly of ubiquitin (a 76-residue protein attached to proteins as an intracellular targeting signal).. In terms of biological role, deubiquitinating enzyme that hydrolyzes 'Lys-6'- and 'Lys-11'-linked polyubiquitin. Also hydrolyzes heterotypic (mixed and branched) and homotypic chains. Important regulator of energy metabolism. Glucose and fatty acids trigger its nuclear translocation by CBP-dependent acetylation. In the nucleus, deubiquitinates and stabilizes the nuclear receptor PPARD regulating the expression of various genes involved in glucose and lipid metabolism and oxidative phosphorylation. Also acts as a negative regulator of the ribosome quality control (RQC) by mediating deubiquitination of 40S ribosomal proteins RPS10/eS10 and RPS20/uS10, thereby antagonizing ZNF598-mediated 40S ubiquitination. This is Ubiquitin carboxyl-terminal hydrolase 21 (USP21) from Bos taurus (Bovine).